We begin with the raw amino-acid sequence, 110 residues long: Neural hemoglobin (110 aa).

Positions 2 to 110 constitute a Globin domain; sequence VNWAAVVDDF…HAIDDILSHL (109 aa). His70 is a binding site for heme.

It belongs to the globin family. As to quaternary structure, homotetramer. Self-associates in the deoxy state. Seems to dissociate upon oxygenation.

Functionally, acts as an oxygen store capable of sustaining neuronal activity in an anoxic environment for 5 to 30 minutes. The chain is Neural hemoglobin from Cerebratulus lacteus (Milky ribbon worm).